We begin with the raw amino-acid sequence, 538 residues long: MAGELKVLNALDSAKTQWYHFTAIVIAGMGFFTDAYDLFSISLVTKLLGRIYYFNPASKSPGSLPPNVSAAVNGVAFCGTLAGQLFFGWLGDKMGRKKVYGMTLMLMVICCLASGLSFGSSAKGVMATLCFFRFWLGFGIGGDYPLSATIMSEYANKRTRGAFIAAVFAMQGFGNLTGGIVAIIVSAAFKARFDAPAYRDDRAGSTVPQADYAWRIVLMFGAIPALLTYYWRMKMPETARYTALVAKNAKQAAADMTQVLNVEIVEEQEKADEVARREQFGLFSRQFLRRHGRHLLGTTVCWFVLDIAFYSSNLFQKDIYTAVQWLPKADTMSALEEMFKISRAQTLVALCGTIPGYWFTVFFIDIIGRFVIQLGGFFFMTAFMLGLAVPYHHWTTPGNHIGFVVMYAFTFFFANFGPNSTTFIVPAEIFPARLRSTCHGISAAAGKAGAIVGSFGFLYAAQSTDASKTDAGYPPGIGVRNSLFFLAGCNVIGFFFTFLVPESKGKSLEELSGENEDDDDVPEAPSTADHRTAPAPPA.

Residues 1-23 lie on the Cytoplasmic side of the membrane; it reads MAGELKVLNALDSAKTQWYHFTA. The chain crosses the membrane as a helical span at residues 24 to 44; the sequence is IVIAGMGFFTDAYDLFSISLV. The Extracellular segment spans residues 45 to 69; it reads TKLLGRIYYFNPASKSPGSLPPNVS. Residues 70–90 traverse the membrane as a helical segment; it reads AAVNGVAFCGTLAGQLFFGWL. At 91-98 the chain is on the cytoplasmic side; it reads GDKMGRKK. A helical membrane pass occupies residues 99-119; the sequence is VYGMTLMLMVICCLASGLSFG. Residues 120 to 123 are Extracellular-facing; sequence SSAK. A helical transmembrane segment spans residues 124-144; it reads GVMATLCFFRFWLGFGIGGDY. At 145-163 the chain is on the cytoplasmic side; the sequence is PLSATIMSEYANKRTRGAF. Residues 164–184 traverse the membrane as a helical segment; that stretch reads IAAVFAMQGFGNLTGGIVAII. Residues 185 to 210 are Extracellular-facing; that stretch reads VSAAFKARFDAPAYRDDRAGSTVPQA. Residues 211 to 231 form a helical membrane-spanning segment; that stretch reads DYAWRIVLMFGAIPALLTYYW. Over 232 to 294 the chain is Cytoplasmic; that stretch reads RMKMPETARY…RQFLRRHGRH (63 aa). A helical membrane pass occupies residues 295–315; sequence LLGTTVCWFVLDIAFYSSNLF. Residues 316-346 are Extracellular-facing; the sequence is QKDIYTAVQWLPKADTMSALEEMFKISRAQT. Residues 347-367 form a helical membrane-spanning segment; that stretch reads LVALCGTIPGYWFTVFFIDII. Residues 368-369 lie on the Cytoplasmic side of the membrane; it reads GR. The helical transmembrane segment at 370-390 threads the bilayer; that stretch reads FVIQLGGFFFMTAFMLGLAVP. At 391-396 the chain is on the extracellular side; sequence YHHWTT. The chain crosses the membrane as a helical span at residues 397–417; that stretch reads PGNHIGFVVMYAFTFFFANFG. At 418–440 the chain is on the cytoplasmic side; the sequence is PNSTTFIVPAEIFPARLRSTCHG. Residues 441-461 traverse the membrane as a helical segment; that stretch reads ISAAAGKAGAIVGSFGFLYAA. Residues 462 to 481 are Extracellular-facing; that stretch reads QSTDASKTDAGYPPGIGVRN. The chain crosses the membrane as a helical span at residues 482 to 502; it reads SLFFLAGCNVIGFFFTFLVPE. Residues 503 to 538 lie on the Cytoplasmic side of the membrane; it reads SKGKSLEELSGENEDDDDVPEAPSTADHRTAPAPPA. The tract at residues 507–538 is disordered; it reads SLEELSGENEDDDDVPEAPSTADHRTAPAPPA. Residues 511 to 522 show a composition bias toward acidic residues; the sequence is LSGENEDDDDVP.

This sequence belongs to the major facilitator superfamily. Phosphate:H(+) symporter (TC 2.A.1.9) family.

The protein resides in the membrane. In terms of biological role, high-affinity transporter for external inorganic phosphate. This Oryza sativa subsp. indica (Rice) protein is Probable inorganic phosphate transporter 1-4 (PHT1-4).